Here is a 216-residue protein sequence, read N- to C-terminus: Maintenance of carboxysome distribution protein A (216 aa).

The ATP site is built by Gly18, Gly19, Gly21, Lys22, Thr23, Thr24, and Gln47. A Mg(2+)-binding site is contributed by Thr23.

Belongs to the ParA family. McdA subfamily. In terms of assembly, homodimerizes in the presence of ATP. Each subunit binds 1 ATP molecule; some residues cross the dimer interface to contact ATP in the other subunit. Forms a complex with McdB.

It is found in the cytoplasm. The protein localises to the nucleoid. The catalysed reaction is ATP + H2O = ADP + phosphate + H(+). Its function is as follows. McdA and McdB together mediate carboxysome (Cb) spacing, size, ultrastructure and probably inheritance in the cell, together they prevent Cb aggregation. McdA is an ATPase that forms dynamic gradients on the nucleoid in response to adapter protein McdB, which associates with carboxysomes. The interplay between McdA gradients on the nucleoid and McdB-bound carboxysomes result in the equal spacing of Cbs along the cell length. Functionally, incorrect positioning (aggregation) of carboxysomes results in reduced CO(2) fixation by encapsulated ribulose-1,5-bisphosphate carboxylase (RuBisCO, cbbL/cbbS), which leads to slower growth. This chain is Maintenance of carboxysome distribution protein A, found in Gloeobacter kilaueensis (strain ATCC BAA-2537 / CCAP 1431/1 / ULC 316 / JS1).